The sequence spans 425 residues: 1,4-beta-D-glucan glucohydrolase (425 aa).

The active-site Proton donor is the Glu-164. Catalysis depends on Glu-349, which acts as the Nucleophile.

Belongs to the glycosyl hydrolase 1 family. Monomer.

The enzyme catalyses Hydrolysis of (1-&gt;4)-linkages in (1-&gt;4)-beta-D-glucans, to remove successive glucose units.. It catalyses the reaction Hydrolysis of terminal, non-reducing beta-D-glucosyl residues with release of beta-D-glucose.. Its pathway is glycan metabolism; cellulose degradation. It participates in glycan metabolism; beta-D-glucan degradation. Its function is as follows. Broad substrate specificity glycosidase. Releases glucose from soluble glucooligomers, with a preference for longer oligomers; acts more readily on cellotetraose than on cellobiose. Displays similar activities towards the disaccharides lactose and cellobiose. Is also able to hydrolyze various aryl-beta-glycosides in vitro. The chain is 1,4-beta-D-glucan glucohydrolase (bglA) from Thermotoga neapolitana.